The sequence spans 1200 residues: Ice nucleation protein (1200 aa).

The interval 176-1151 is octapeptide periodicity; the sequence is ATYGSTLSGD…LSAGEDSILI (976 aa).

The protein belongs to the bacterial ice nucleation protein family.

It is found in the cell outer membrane. Functionally, ice nucleation proteins enable bacteria to nucleate crystallization in supercooled water. This is Ice nucleation protein (inaZ) from Pseudomonas syringae pv. syringae.